The primary structure comprises 100 residues: U-myrmeciitoxin(01)-Mg7b (100 aa).

The signal sequence occupies residues 1–17; that stretch reads MKLSCLSLALAIILVLA. Positions 18-50 are excised as a propeptide; sequence IVYSPHMEVKALADAEPDAIGFADAFGEADAEP. O-linked (GalNAc...) serine glycosylation occurs at Ser-85. O-linked (GalNAc...) threonine glycans are attached at residues Thr-94 and Thr-95.

The protein belongs to the formicidae venom precursor-01 superfamily. In terms of processing, glycosylation is critical to maintaining the aqueous solubility of this protein, but does not directly contribute to its activity. In terms of tissue distribution, expressed by the venom gland.

The protein localises to the secreted. Its subcellular location is the target cell membrane. Its function is as follows. Neurotoxin that triggers pain behavior and inflammation in mammals, and is paralytic and lethal to insects. Causes a time-dependent increase in cell leak current. May act by targeting membranes. The protein is U-myrmeciitoxin(01)-Mg7b of Myrmecia gulosa (Red bulldog ant).